Here is a 344-residue protein sequence, read N- to C-terminus: Mitochondrial mRNA pseudouridine synthase RPUSD3 (344 aa).

The transit peptide at 1–41 directs the protein to the mitochondrion; sequence MGGWRVLGQASGGWRRGLGIRATSTAAGFGTKARHQLQRRG. The interval 29 to 59 is disordered; that stretch reads FGTKARHQLQRRGASKPSDPPGDQPFPGLLR. A compositionally biased stretch (basic residues) spans 32–42; that stretch reads KARHQLQRRGA. Ser-64 carries the phosphoserine modification.

Belongs to the pseudouridine synthase RluA family. Forms a regulatory protein-RNA complex, consisting of RCC1L, NGRN, RPUSD3, RPUSD4, TRUB2, FASTKD2 and 16S mt-rRNA.

The protein localises to the mitochondrion matrix. The enzyme catalyses a uridine in mRNA = a pseudouridine in mRNA. In terms of biological role, catalyzes uridine to pseudouridine isomerization (pseudouridylation) of specific mitochondrial mRNAs (mt-mRNAs), a post-transcriptional modification necessary for their translation. Acts at position 390 in COXI mt-mRNA and at position 697-699 in mitochondrial COXIII mt-mRNA. As a component of a functional protein-RNA module, consisting of RCC1L, NGRN, RPUSD3, RPUSD4, TRUB2, FASTKD2 and 16S mitochondrial ribosomal RNA (16S mt-rRNA), controls 16S mt-rRNA abundance and may play a role in mitochondrial ribosome biogenesis. The protein is Mitochondrial mRNA pseudouridine synthase RPUSD3 (RPUSD3) of Bos taurus (Bovine).